We begin with the raw amino-acid sequence, 99 residues long: NADH-quinone oxidoreductase subunit K (99 aa).

3 helical membrane passes run 3 to 23, 28 to 48, and 62 to 82; these read PMYYLYLSAVLFTLGAVGVLL, IIVFMCVELMLNAANLALVTF, and FFVMVVAAAEVVVGLAIIVAI.

It belongs to the complex I subunit 4L family. In terms of assembly, NDH-1 is composed of 14 different subunits. Subunits NuoA, H, J, K, L, M, N constitute the membrane sector of the complex.

The protein localises to the cell membrane. The catalysed reaction is a quinone + NADH + 5 H(+)(in) = a quinol + NAD(+) + 4 H(+)(out). Its function is as follows. NDH-1 shuttles electrons from NADH, via FMN and iron-sulfur (Fe-S) centers, to quinones in the respiratory chain. The immediate electron acceptor for the enzyme in this species is believed to be a menaquinone. Couples the redox reaction to proton translocation (for every two electrons transferred, four hydrogen ions are translocated across the cytoplasmic membrane), and thus conserves the redox energy in a proton gradient. The chain is NADH-quinone oxidoreductase subunit K from Acidothermus cellulolyticus (strain ATCC 43068 / DSM 8971 / 11B).